We begin with the raw amino-acid sequence, 378 residues long: uncharacterized protein (378 aa).

10 helical membrane-spanning segments follow: residues 7–29, 33–55, 68–85, 90–108, 115–137, 152–174, 204–225, 245–267, 280–302, and 347–366; these read VTPFFFALALLNLLISLFIRLSQ, LFFVSLVFGFVGLTLMGAMYQII, VSYLVFFLILVSFYEFYT, SGSLFLFLGSLIFFFHLLL, PLTVRFLLASMIYLVLSALFLYL, LTVGSMLNAIYGVELAWIPMLIM, NYKLIALAGLLEFGVALYFLYL, IFLFALLFLPLGMLLGIFSASHA, LILYGFGAFTIFGGMLHLLPRIV, and FSPLHVISTVVYLVIMALFL.

The protein localises to the cell membrane. This is an uncharacterized protein from Aquifex aeolicus (strain VF5).